Consider the following 535-residue polypeptide: Beta-amylase (535 aa).

A propeptide spans 1–2 (ME) (removed in mature form). The residue at position 3 (Val-3) is an N-acetylvaline. Positions 51, 91, and 99 each coordinate substrate. Glu-184 acts as the Proton donor in catalysis. Substrate-binding residues include Lys-293, His-298, and Thr-340. The active-site Proton acceptor is the Glu-378. Substrate-binding positions include 379–380 (NA) and Arg-418. Tandem repeats lie at residues 489–499 (GPTGGMGGQAE), 500–510 (GPTCGMGGQVK), and 511–521 (GPTGGMGGQAE). The 4 X 11 AA tandem repeats stretch occupies residues 489 to 532 (GPTGGMGGQAEGPTCGMGGQVKGPTGGMGGQAEDPTSGMGGELP). Residues 490–535 (PTGGMGGQAEGPTCGMGGQVKGPTGGMGGQAEDPTSGMGGELPATM) constitute a propeptide, removed in mature form. Residues 513 to 535 (TGGMGGQAEDPTSGMGGELPATM) form a disordered region. The stretch at 522-532 (DPTSGMGGELP) is one 4; approximate repeat.

This sequence belongs to the glycosyl hydrolase 14 family. Monomer. Endosperm.

It catalyses the reaction Hydrolysis of (1-&gt;4)-alpha-D-glucosidic linkages in polysaccharides so as to remove successive maltose units from the non-reducing ends of the chains.. Catalyzes the liberation of maltose from 1,4-alpha-D glucans. In Hordeum vulgare subsp. spontaneum (Wild barley), this protein is Beta-amylase.